The chain runs to 177 residues: UPF0251 protein Cag_0886 (177 aa).

Residues glycine 147–glutamate 177 form a disordered region.

Belongs to the UPF0251 family.

This is UPF0251 protein Cag_0886 from Chlorobium chlorochromatii (strain CaD3).